Consider the following 310-residue polypeptide: MILTVTMNPSVDIAYQLDVFNLDTVNRVAETHKTPGGKGLNVTRVLSQVGDDVLATGLLGGKIGEFIQKELDQVGIEHDFSPISGETRNCIAILHEGQQTEILESGPTISDEEGKVFLEHFESLVKQVSIISISGSLPKGLPVDFYSKMIEICERYQKPVVLDCSGQALLEVLKGHAKPTVIKPNTEELSQLLNMEVTSDTSVLKAALDQDLFDGVEWVIVSLGSKGAFAKHIDSYYQVTIPKIEVVNPVGSGDSTVAGITSALYHAESDEELLKKANCLGMLNAQEKQTGHVNMANYSALFERIKVEEV.

This sequence belongs to the carbohydrate kinase PfkB family. LacC subfamily.

The catalysed reaction is D-tagatofuranose 6-phosphate + ATP = D-tagatofuranose 1,6-bisphosphate + ADP + H(+). It functions in the pathway carbohydrate metabolism; D-tagatose 6-phosphate degradation; D-glyceraldehyde 3-phosphate and glycerone phosphate from D-tagatose 6-phosphate: step 1/2. The sequence is that of Tagatose-6-phosphate kinase from Streptococcus uberis (strain ATCC BAA-854 / 0140J).